Reading from the N-terminus, the 29-residue chain is Myosin heavy chain, muscle (29 aa).

Basic and acidic residues predominate over residues 1–16 (SKYESEGVARSEELQE). A disordered region spans residues 1–29 (SKYESEGVARSEELQEVHQAFADAGRKPI).

In terms of assembly, muscle myosin is a hexameric protein that consists of 2 heavy chain subunits (MHC), 2 alkali light chain subunits (MLC) and 2 regulatory light chain subunits (MLC-2).

Its subcellular location is the cytoplasm. The protein localises to the myofibril. Muscle contraction. The polypeptide is Myosin heavy chain, muscle (Bombyx mori (Silk moth)).